Reading from the N-terminus, the 1397-residue chain is Protein RhsC (1397 aa).

A run of 28 repeats spans residues 330–352, 353–374, 375–417, 418–438, 439–460, 461–481, 482–502, 503–525, 526–546, 547–567, 568–588, 589–609, 610–629, 630–650, 651–671, 672–691, 692–711, 712–734, 735–758, 808–828, 829–850, 851–871, 872–894, 895–930, 931–959, 960–984, 985–1019, and 1162–1186. Residues 330–1186 are 28 X approximate tandem repeats; it reads NTQVRSFTYD…LNEENPHQLQ (857 aa). The segment at 1292 to 1312 is disordered; it reads GGQDQRGESKGDGLWGPGKAS.

The protein belongs to the RHS family.

In terms of biological role, rhs elements have a nonessential function. They may play an important role in the natural ecology of the cell. This chain is Protein RhsC (rhsC), found in Escherichia coli (strain K12).